A 369-amino-acid chain; its full sequence is MGEITNVTEYQAIAKQKLPKMIYDYYASGAEDEWTLQENREAFARILFRPRILIDVSKIDMATTVLGFKISMPIMIAPSAMQKMAHPDGEYATARAASAAGTIMTLSSWATSSVEEVASTGPGIRFFQLYVYKDRRVVEQLVRRAERAGFKAIALTVDTPRLGRREADIKNRFVLPPFLTLKNFEGLELGKMDQASDSGLASYVAGQIDRTLSWKDVKWLQTITTLPILVKGVITAEDTRLAVENGAAGIIVSNHGARQLDYVPATISALEEVVKAARGQLPVFLDGGVRRGTDVFKALALGAAGVFIGRPVVFSLAAAGEAGVRNVLQMLRDEFELTMALSGCTSLADITRNHVITEADKLGVMPSRL.

The FMN hydroxy acid dehydrogenase domain maps to methionine 1–aspartate 360. Tyrosine 25 provides a ligand contact to glyoxylate. Residues proline 78–alanine 80, serine 107, glutamine 128–tyrosine 130, and threonine 156 each bind FMN. Tyrosine 130 lines the glyoxylate pocket. Residue arginine 165 coordinates glyoxylate. The FMN site is built by lysine 231 and serine 253. Glyoxylate-binding residues include histidine 255 and arginine 258. The Proton acceptor role is filled by histidine 255. FMN-binding positions include aspartate 286 to arginine 290 and glycine 309 to arginine 310. A Microbody targeting signal motif is present at residues serine 367 to leucine 369.

This sequence belongs to the FMN-dependent alpha-hydroxy acid dehydrogenase family. Homotetramer. It depends on FMN as a cofactor.

It is found in the peroxisome. The enzyme catalyses glycolate + O2 = glyoxylate + H2O2. It participates in photosynthesis; photorespiration; glycine from 2-phosphoglycolate: step 2/3. Its function is as follows. Catalyzes the oxidation of glycolate to glyoxylate, with a reduction of O2 to H2O2. Is a key enzyme in photorespiration in green plants. This Oryza sativa subsp. japonica (Rice) protein is Glycolate oxidase 5 (GLO5).